Here is a 272-residue protein sequence, read N- to C-terminus: 3-methyl-2-oxobutanoate hydroxymethyltransferase (272 aa).

Mg(2+)-binding residues include aspartate 51 and aspartate 90. 3-methyl-2-oxobutanoate contacts are provided by residues aspartate 51–serine 52, aspartate 90, and lysine 118. Glutamate 120 serves as a coordination point for Mg(2+). Catalysis depends on glutamate 187, which acts as the Proton acceptor.

It belongs to the PanB family. In terms of assembly, homodecamer; pentamer of dimers. It depends on Mg(2+) as a cofactor.

Its subcellular location is the cytoplasm. It catalyses the reaction 3-methyl-2-oxobutanoate + (6R)-5,10-methylene-5,6,7,8-tetrahydrofolate + H2O = 2-dehydropantoate + (6S)-5,6,7,8-tetrahydrofolate. The protein operates within cofactor biosynthesis; (R)-pantothenate biosynthesis; (R)-pantoate from 3-methyl-2-oxobutanoate: step 1/2. Its function is as follows. Catalyzes the reversible reaction in which hydroxymethyl group from 5,10-methylenetetrahydrofolate is transferred onto alpha-ketoisovalerate to form ketopantoate. The sequence is that of 3-methyl-2-oxobutanoate hydroxymethyltransferase from Xylella fastidiosa (strain 9a5c).